A 210-amino-acid polypeptide reads, in one-letter code: Large ribosomal subunit protein uL3 (210 aa).

The interval 125 to 151 (RHGQSRGPMSHGSRYHRRPGSMGPVAP) is disordered.

It belongs to the universal ribosomal protein uL3 family. As to quaternary structure, part of the 50S ribosomal subunit. Forms a cluster with proteins L14 and L19.

Functionally, one of the primary rRNA binding proteins, it binds directly near the 3'-end of the 23S rRNA, where it nucleates assembly of the 50S subunit. The polypeptide is Large ribosomal subunit protein uL3 (Bacillus cereus (strain ATCC 14579 / DSM 31 / CCUG 7414 / JCM 2152 / NBRC 15305 / NCIMB 9373 / NCTC 2599 / NRRL B-3711)).